The sequence spans 524 residues: Vang-like protein 1 (524 aa).

Residues 1 to 15 (MDTESTYSGYSYYSS) show a composition bias toward low complexity. Residues 1 to 85 (MDTESTYSGY…TTAITGTSEH (85 aa)) form a disordered region. Residues 1-117 (MDTESTYSGY…KRYLGLTVAS (117 aa)) are Cytoplasmic-facing. A compositionally biased stretch (polar residues) spans 73–85 (GETTTAITGTSEH). S86 and S88 each carry phosphoserine. A helical membrane pass occupies residues 118–138 (FLGLLVFLTPIAFILLPPILW). At 139–151 (RDELEPCGTICEG) the chain is on the extracellular side. A helical membrane pass occupies residues 152-172 (LFISMAFKLLILLIGTWALFF). Topologically, residues 173–182 (RKRRADMPRV) are cytoplasmic. The helical transmembrane segment at 183 to 203 (FVFRALLLVLIFLFVVSYWLF) threads the bilayer. Over 204-222 (YGVRILDSRDRNYQGIVQY) the chain is Extracellular. Residues 223 to 243 (AVSLVDALLFIHYLAIVLLEL) form a helical membrane-spanning segment. Topologically, residues 244–524 (RQLQPMFTLQ…VLRLQSETSV (281 aa)) are cytoplasmic.

Belongs to the Vang family. In terms of assembly, heterodimer with VANGL2. Interacts through its C-terminal region with the N-terminal half of DVL1, DVL2 and DVL3. The PDZ domain of DVL1, DVL2 and DVL3 is required for the interaction. According to PubMed:11956595, ubiquitously expressed. According to PubMed:12011995, expressed specifically in testis and ovary.

The protein localises to the cell membrane. This Homo sapiens (Human) protein is Vang-like protein 1 (VANGL1).